The following is a 479-amino-acid chain: MSLLIRGATVVTHEESYRADVLCANGLIQAIGENLETPSGCDVLDGGGQYLMPGGIDPHTHMQLPFMGTVASEDFFSGTAAGLAGGTTSIIDFVIPNPRQSLLEAFHTWRGWAQKSAADYGFHVAITWWSDEVAREMGELVAQHGVNSFKHFMAYKNAIMAADDTLVASFERCLELGAVPTVHAENGELVFHLQQKLLAQGLTGPEAHPLSRPPQVEGEAASRAIRIAETLGTPLYLVHISSREALDEIAYARAKGQPVYGEVLAGHLLLDDSVYRHPDWATAAGYVMSPPFRPVEHQEALWRGLQSGNLHTTATDHCCFCAEQKAMGRDDFSKIPNGTAGIEDRMALLWDAGVNSGRLSMHEFVALTSTNTAKIFNLFPRKGAIRVGADADLVLWDPQGSRTLSAATHHQRVDFNIFEGRTVRGIPSHTISQGKLLWAAGDLRAEPGAGRYVERPAYPSVYEVLGRRAERQRPVAVER.

H59, H61, and K150 together coordinate Zn(2+). The residue at position 150 (K150) is an N6-carboxylysine. Y155 lines the substrate pocket. Zn(2+) contacts are provided by H183 and H239. A substrate-binding site is contributed by S289. Position 316 (D316) interacts with Zn(2+). N337 provides a ligand contact to substrate.

Belongs to the metallo-dependent hydrolases superfamily. Hydantoinase/dihydropyrimidinase family. Homotetramer. The cofactor is Zn(2+). In terms of processing, carboxylation allows a single lysine to coordinate two zinc ions.

It carries out the reaction 5,6-dihydrouracil + H2O = 3-(carbamoylamino)propanoate + H(+). Catalyzes the hydrolysis of dihydropyrimidines and of the structurally related DL-5-mono-substituted hydantoins, to produce N-carbamoyl-D-amino acids. This chain is D-hydantoinase/dihydropyrimidinase (dht), found in Pseudomonas aeruginosa (strain ATCC 15692 / DSM 22644 / CIP 104116 / JCM 14847 / LMG 12228 / 1C / PRS 101 / PAO1).